Here is a 37-residue protein sequence, read N- to C-terminus: Large ribosomal subunit protein bL36 (37 aa).

The protein belongs to the bacterial ribosomal protein bL36 family.

The chain is Large ribosomal subunit protein bL36 from Synechococcus sp. (strain CC9605).